A 430-amino-acid chain; its full sequence is MKQALRVAFGFLMLWAAVLHAEVRIEITQGVDSARPIGVVPFKWAGPGAAPEDIGGIVAADLRNSGKFNPLDRSRLPQQPATAQEVQPTAWSALGIDAVVVGQVTPNPDGSYNVAYQLVDTGGAPGTVLAQNSYKVNKQWLRYAGHTASDEVFEKLTGIKGAFRTRIAYVVQTNGGQFPYELRVSDYDGYNQFVVHRSPQPLMSPAWSPDGSKLAYVTFESGRSALVIQTLANGAVRQVASFPRHNGAPAFSPDGTKLAFALSKTGSLNLYVMDLASGQIRQITDGRSNNTEPTWFPDSQTLAFTSDQAGRPQVYKMNINGGAAQRITWEGSQNQDADVSSDGKFMVMVSSNNGQQHIAKQDLVTGGVQVLSSTFLDETPSLAPNGTMVIYSSSQGMGSVLNLVSTDGRFKARLPATDGQVKSPAWSPYL.

The first 21 residues, 1 to 21, serve as a signal peptide directing secretion; it reads MKQALRVAFGFLMLWAAVLHA.

Belongs to the TolB family. As to quaternary structure, the Tol-Pal system is composed of five core proteins: the inner membrane proteins TolA, TolQ and TolR, the periplasmic protein TolB and the outer membrane protein Pal. They form a network linking the inner and outer membranes and the peptidoglycan layer.

Its subcellular location is the periplasm. Part of the Tol-Pal system, which plays a role in outer membrane invagination during cell division and is important for maintaining outer membrane integrity. TolB occupies a key intermediary position in the Tol-Pal system because it communicates directly with both membrane-embedded components, Pal in the outer membrane and TolA in the inner membrane. The sequence is that of Tol-Pal system protein TolB from Salmonella enteritidis PT4 (strain P125109).